The following is a 422-amino-acid chain: L-threonine dehydratase biosynthetic IlvA (422 aa).

Lys56 is subject to N6-(pyridoxal phosphate)lysine. Residues Asn83, 189–193 (GGGGL), and Ser315 each bind pyridoxal 5'-phosphate. The 75-residue stretch at 339-413 (HYFILNFPQR…FDPSNIYINE (75 aa)) folds into the ACT-like domain.

The protein belongs to the serine/threonine dehydratase family. Homotetramer. Pyridoxal 5'-phosphate serves as cofactor.

The catalysed reaction is L-threonine = 2-oxobutanoate + NH4(+). It functions in the pathway amino-acid biosynthesis; L-isoleucine biosynthesis; 2-oxobutanoate from L-threonine: step 1/1. Its function is as follows. Catalyzes the anaerobic formation of alpha-ketobutyrate and ammonia from threonine in a two-step reaction. The first step involved a dehydration of threonine and a production of enamine intermediates (aminocrotonate), which tautomerizes to its imine form (iminobutyrate). Both intermediates are unstable and short-lived. The second step is the nonenzymatic hydrolysis of the enamine/imine intermediates to form 2-ketobutyrate and free ammonia. In the low water environment of the cell, the second step is accelerated by RidA. This chain is L-threonine dehydratase biosynthetic IlvA (ilvA), found in Staphylococcus aureus (strain MSSA476).